Reading from the N-terminus, the 167-residue chain is Pathogenesis-related protein PRMS (167 aa).

The first 27 residues, 1–27 (MEASNKLAVLLLWLVMAAATAVHPSYS), serve as a signal peptide directing secretion. In terms of domain architecture, SCP spans 37–155 (PQNSARAAVG…NRGVFIICNY (119 aa)). 3 disulfide bridges follow: Cys71–Cys143, Cys116–Cys122, and Cys138–Cys153.

Belongs to the CRISP family.

Functionally, probably involved in the defense reaction of plants against pathogens. In Zea mays (Maize), this protein is Pathogenesis-related protein PRMS (PRMS).